A 51-amino-acid polypeptide reads, in one-letter code: Non-specific lipid-transfer protein (51 aa).

It belongs to the plant LTP family.

Its function is as follows. Plant non-specific lipid-transfer proteins transfer phospholipids as well as galactolipids across membranes. May play a role in wax or cutin deposition in the cell walls of expanding epidermal cells and certain secretory tissues. This is Non-specific lipid-transfer protein from Lycium barbarum (Barbary matrimony-vine).